The chain runs to 59 residues: MANTVKVTLIKSTNGRLANHKACVKGLGLRRIGHTVEVLDTPENRGMINKAYYLLKVEG.

This sequence belongs to the universal ribosomal protein uL30 family. In terms of assembly, part of the 50S ribosomal subunit.

The polypeptide is Large ribosomal subunit protein uL30 (Ectopseudomonas mendocina (strain ymp) (Pseudomonas mendocina)).